A 692-amino-acid polypeptide reads, in one-letter code: Elongation factor G (692 aa).

The 276-residue stretch at 8–283 folds into the tr-type G domain; sequence DRYRNIGIMA…AVVDFLPSPL (276 aa). GTP contacts are provided by residues 17–24, 81–85, and 135–138; these read AHIDAGKT, DTPGH, and NKMD.

This sequence belongs to the TRAFAC class translation factor GTPase superfamily. Classic translation factor GTPase family. EF-G/EF-2 subfamily.

The protein localises to the cytoplasm. In terms of biological role, catalyzes the GTP-dependent ribosomal translocation step during translation elongation. During this step, the ribosome changes from the pre-translocational (PRE) to the post-translocational (POST) state as the newly formed A-site-bound peptidyl-tRNA and P-site-bound deacylated tRNA move to the P and E sites, respectively. Catalyzes the coordinated movement of the two tRNA molecules, the mRNA and conformational changes in the ribosome. The chain is Elongation factor G from Rhodospirillum rubrum (strain ATCC 11170 / ATH 1.1.1 / DSM 467 / LMG 4362 / NCIMB 8255 / S1).